A 284-amino-acid polypeptide reads, in one-letter code: L-ribulose-5-phosphate 3-epimerase UlaE (284 aa).

The protein belongs to the L-ribulose-5-phosphate 3-epimerase family.

It catalyses the reaction L-ribulose 5-phosphate = L-xylulose 5-phosphate. The protein operates within cofactor degradation; L-ascorbate degradation; D-xylulose 5-phosphate from L-ascorbate: step 3/4. In terms of biological role, catalyzes the isomerization of L-xylulose-5-phosphate to L-ribulose-5-phosphate. Is involved in the anaerobic L-ascorbate utilization. The polypeptide is L-ribulose-5-phosphate 3-epimerase UlaE (Shigella flexneri serotype 5b (strain 8401)).